A 336-amino-acid polypeptide reads, in one-letter code: Holliday junction branch migration complex subunit RuvB (336 aa).

The tract at residues 4–184 is large ATPase domain (RuvB-L); sequence SDRLISSQSI…FGIVQRLEYY (181 aa). ATP-binding positions include Ile-23, Arg-24, Gly-65, Lys-68, Thr-69, Thr-70, 131–133, Arg-174, Tyr-184, and Arg-221; that span reads EDY. Thr-69 contacts Mg(2+). The small ATPAse domain (RuvB-S) stretch occupies residues 185–255; the sequence is SVDSLTQIVA…MAQQALEMLE (71 aa). A head domain (RuvB-H) region spans residues 258–336; sequence QHGFDLMDRK…HFGFSAIEQE (79 aa). Arg-313 and Arg-318 together coordinate DNA.

Belongs to the RuvB family. In terms of assembly, homohexamer. Forms an RuvA(8)-RuvB(12)-Holliday junction (HJ) complex. HJ DNA is sandwiched between 2 RuvA tetramers; dsDNA enters through RuvA and exits via RuvB. An RuvB hexamer assembles on each DNA strand where it exits the tetramer. Each RuvB hexamer is contacted by two RuvA subunits (via domain III) on 2 adjacent RuvB subunits; this complex drives branch migration. In the full resolvosome a probable DNA-RuvA(4)-RuvB(12)-RuvC(2) complex forms which resolves the HJ.

The protein resides in the cytoplasm. It catalyses the reaction ATP + H2O = ADP + phosphate + H(+). The RuvA-RuvB-RuvC complex processes Holliday junction (HJ) DNA during genetic recombination and DNA repair, while the RuvA-RuvB complex plays an important role in the rescue of blocked DNA replication forks via replication fork reversal (RFR). RuvA specifically binds to HJ cruciform DNA, conferring on it an open structure. The RuvB hexamer acts as an ATP-dependent pump, pulling dsDNA into and through the RuvAB complex. RuvB forms 2 homohexamers on either side of HJ DNA bound by 1 or 2 RuvA tetramers; 4 subunits per hexamer contact DNA at a time. Coordinated motions by a converter formed by DNA-disengaged RuvB subunits stimulates ATP hydrolysis and nucleotide exchange. Immobilization of the converter enables RuvB to convert the ATP-contained energy into a lever motion, pulling 2 nucleotides of DNA out of the RuvA tetramer per ATP hydrolyzed, thus driving DNA branch migration. The RuvB motors rotate together with the DNA substrate, which together with the progressing nucleotide cycle form the mechanistic basis for DNA recombination by continuous HJ branch migration. Branch migration allows RuvC to scan DNA until it finds its consensus sequence, where it cleaves and resolves cruciform DNA. In Legionella pneumophila (strain Lens), this protein is Holliday junction branch migration complex subunit RuvB.